The primary structure comprises 167 residues: UPF0336 protein MAP_4109 (167 aa).

Residues 21-124 (GREQLRQFAL…RFGADIVVTK (104 aa)) enclose the MaoC-like domain.

It belongs to the UPF0336 family.

In Mycolicibacterium paratuberculosis (strain ATCC BAA-968 / K-10) (Mycobacterium paratuberculosis), this protein is UPF0336 protein MAP_4109.